The following is a 475-amino-acid chain: UDP-N-acetylmuramate--L-alanine ligase (475 aa).

114–120 (GTHGKTT) is an ATP binding site.

It belongs to the MurCDEF family.

Its subcellular location is the cytoplasm. It carries out the reaction UDP-N-acetyl-alpha-D-muramate + L-alanine + ATP = UDP-N-acetyl-alpha-D-muramoyl-L-alanine + ADP + phosphate + H(+). It functions in the pathway cell wall biogenesis; peptidoglycan biosynthesis. Cell wall formation. The protein is UDP-N-acetylmuramate--L-alanine ligase of Bartonella tribocorum (strain CIP 105476 / IBS 506).